The chain runs to 315 residues: Biotin synthase (315 aa).

Residues 39 to 266 (NSLQFATLLS…KSAIRLTAGR (228 aa)) form the Radical SAM core domain. [4Fe-4S] cluster-binding residues include cysteine 54, cysteine 58, and cysteine 61. [2Fe-2S] cluster is bound by residues cysteine 98, cysteine 129, cysteine 189, and arginine 261.

It belongs to the radical SAM superfamily. Biotin synthase family. Homodimer. [4Fe-4S] cluster serves as cofactor. It depends on [2Fe-2S] cluster as a cofactor.

The catalysed reaction is (4R,5S)-dethiobiotin + (sulfur carrier)-SH + 2 reduced [2Fe-2S]-[ferredoxin] + 2 S-adenosyl-L-methionine = (sulfur carrier)-H + biotin + 2 5'-deoxyadenosine + 2 L-methionine + 2 oxidized [2Fe-2S]-[ferredoxin]. The protein operates within cofactor biosynthesis; biotin biosynthesis; biotin from 7,8-diaminononanoate: step 2/2. In terms of biological role, catalyzes the conversion of dethiobiotin (DTB) to biotin by the insertion of a sulfur atom into dethiobiotin via a radical-based mechanism. The protein is Biotin synthase of Legionella pneumophila (strain Lens).